The chain runs to 299 residues: ATP phosphoribosyltransferase (299 aa).

This sequence belongs to the ATP phosphoribosyltransferase family. Long subfamily. Equilibrium between an active dimeric form, an inactive hexameric form and higher aggregates. Interconversion between the various forms is largely reversible and is influenced by the natural substrates and inhibitors of the enzyme. Mg(2+) serves as cofactor.

It localises to the cytoplasm. The enzyme catalyses 1-(5-phospho-beta-D-ribosyl)-ATP + diphosphate = 5-phospho-alpha-D-ribose 1-diphosphate + ATP. It participates in amino-acid biosynthesis; L-histidine biosynthesis; L-histidine from 5-phospho-alpha-D-ribose 1-diphosphate: step 1/9. Its activity is regulated as follows. Feedback inhibited by histidine. In terms of biological role, catalyzes the condensation of ATP and 5-phosphoribose 1-diphosphate to form N'-(5'-phosphoribosyl)-ATP (PR-ATP). Has a crucial role in the pathway because the rate of histidine biosynthesis seems to be controlled primarily by regulation of HisG enzymatic activity. This is ATP phosphoribosyltransferase from Escherichia fergusonii (strain ATCC 35469 / DSM 13698 / CCUG 18766 / IAM 14443 / JCM 21226 / LMG 7866 / NBRC 102419 / NCTC 12128 / CDC 0568-73).